The following is a 356-amino-acid chain: tRNA N6-adenosine threonylcarbamoyltransferase (356 aa).

Fe cation contacts are provided by histidine 115 and histidine 119. Substrate-binding positions include 138-142 (LVSGG), aspartate 171, glycine 184, and asparagine 283. Aspartate 311 lines the Fe cation pocket.

This sequence belongs to the KAE1 / TsaD family. The cofactor is Fe(2+).

Its subcellular location is the cytoplasm. The enzyme catalyses L-threonylcarbamoyladenylate + adenosine(37) in tRNA = N(6)-L-threonylcarbamoyladenosine(37) in tRNA + AMP + H(+). In terms of biological role, required for the formation of a threonylcarbamoyl group on adenosine at position 37 (t(6)A37) in tRNAs that read codons beginning with adenine. Is involved in the transfer of the threonylcarbamoyl moiety of threonylcarbamoyl-AMP (TC-AMP) to the N6 group of A37, together with TsaE and TsaB. TsaD likely plays a direct catalytic role in this reaction. In Prochlorococcus marinus (strain MIT 9301), this protein is tRNA N6-adenosine threonylcarbamoyltransferase.